Reading from the N-terminus, the 558-residue chain is MFECTPISILATFSGTVPEPIEADFPWLSLSILFPIFGSLVVPFIPDKGDGKTVRWYALGIALVTFLITVGAYLKGYDPSQEGLQLAERVSWLPDLGLTWAVGADGLSMPLILLTSFITALAVLAAWPVSFKPKLFFFLILAMDGGQIAVFAVQDMLLFFLAWELELLPVYLLLAIWGGKKRQYAATKFIIYTAGSSLFILLAALAMGFFGGGTPNFEFTHLANQDFGTGFQLLCYGGLLIAFGVKLPVVPLHTWLPDAHGEATAPVHMLLAGILLKMGGYALLRFNAQLLPAAHAQFAPLLIVLGVVNIIYAALTSFAQRNLKRKIAYSSISHMGFVLIGIGSFSSLGTSGAMLQMVSHGLIGASLFFLVGATYDRTRTLQLNEMGGVGQKMRIMFALWTTCSLASLALPGMSGFVSELMVFTGFVTDEVYTLPFRIVIAGLAAIGVILTPIYLLSMLREIFFGKENVEFLSNRELVDAEPREIYVIGSLLVPIIGIGLYPRIMTETYIASIDGLVERDKIAIEQMLKPSETISSNKNLSLITSSTPSLTPYKVRKS.

14 helical membrane-spanning segments follow: residues 25–45 (FPWL…VPFI), 56–76 (WYAL…YLKG), 111–131 (LILL…PVSF), 133–153 (PKLF…VFAV), 157–177 (LLFF…LAIW), 189–209 (FIIY…AMGF), 230–250 (GFQL…LPVV), 264–284 (TAPV…YALL), 298–318 (FAPL…LTSF), 327–347 (IAYS…SFSS), 353–373 (AMLQ…LVGA), 395–417 (IMFA…SGFV), 438–458 (IVIA…LLSM), and 485–505 (IYVI…PRIM).

This sequence belongs to the complex I subunit 4 family.

Its subcellular location is the cellular thylakoid membrane. The catalysed reaction is a plastoquinone + NADH + (n+1) H(+)(in) = a plastoquinol + NAD(+) + n H(+)(out). It catalyses the reaction a plastoquinone + NADPH + (n+1) H(+)(in) = a plastoquinol + NADP(+) + n H(+)(out). Functionally, NDH-1 shuttles electrons from NAD(P)H, via FMN and iron-sulfur (Fe-S) centers, to quinones in the respiratory chain. The immediate electron acceptor for the enzyme in this species is believed to be plastoquinone. Couples the redox reaction to proton translocation (for every two electrons transferred, four hydrogen ions are translocated across the cytoplasmic membrane), and thus conserves the redox energy in a proton gradient. The protein is NAD(P)H-quinone oxidoreductase chain 4 of Prochlorococcus marinus (strain MIT 9211).